Here is a 557-residue protein sequence, read N- to C-terminus: Arginine--tRNA ligase (557 aa).

A 'HIGH' region motif is present at residues 132-142 (ANPTGNLHLGH).

This sequence belongs to the class-I aminoacyl-tRNA synthetase family. As to quaternary structure, monomer.

The protein localises to the cytoplasm. The enzyme catalyses tRNA(Arg) + L-arginine + ATP = L-arginyl-tRNA(Arg) + AMP + diphosphate. This Geobacillus thermodenitrificans (strain NG80-2) protein is Arginine--tRNA ligase.